The following is a 120-amino-acid chain: Small ribosomal subunit protein uS13 (120 aa).

The segment at Pro97 to Lys120 is disordered.

The protein belongs to the universal ribosomal protein uS13 family. As to quaternary structure, part of the 30S ribosomal subunit. Forms a loose heterodimer with protein S19. Forms two bridges to the 50S subunit in the 70S ribosome.

In terms of biological role, located at the top of the head of the 30S subunit, it contacts several helices of the 16S rRNA. In the 70S ribosome it contacts the 23S rRNA (bridge B1a) and protein L5 of the 50S subunit (bridge B1b), connecting the 2 subunits; these bridges are implicated in subunit movement. Contacts the tRNAs in the A and P-sites. The sequence is that of Small ribosomal subunit protein uS13 from Nitratiruptor sp. (strain SB155-2).